The following is a 420-amino-acid chain: Bile acid-CoA:amino acid N-acyltransferase (420 aa).

N6-succinyllysine is present on Lys-40. Ser-125 carries the phosphoserine modification. Catalysis depends on charge relay system residues Cys-235 and Asp-328. Lys-346 and Lys-350 each carry N6-succinyllysine. His-362 (charge relay system) is an active-site residue. An N6-succinyllysine modification is found at Lys-409. Ser-418 is modified (phosphoserine).

Belongs to the C/M/P thioester hydrolase family. Monomer. Highly expressed in liver, kidney, gallbladder, proximal intestine and distal intestine. Weakly expressed in adrenal gland, lung, brain and muscle.

It is found in the cytoplasm. It localises to the cytosol. The protein resides in the peroxisome. The enzyme catalyses choloyl-CoA + glycine = glycocholate + CoA + H(+). It catalyses the reaction hexadecanoyl-CoA + H2O = hexadecanoate + CoA + H(+). It carries out the reaction choloyl-CoA + H2O = cholate + CoA + H(+). The catalysed reaction is chenodeoxycholoyl-CoA + H2O = chenodeoxycholate + CoA + H(+). The enzyme catalyses eicosanoyl-CoA + H2O = eicosanoate + CoA + H(+). It catalyses the reaction octadecanoyl-CoA + H2O = octadecanoate + CoA + H(+). It carries out the reaction docosanoyl-CoA + H2O = docosanoate + CoA + H(+). The catalysed reaction is tetracosanoyl-CoA + H2O = tetracosanoate + CoA + H(+). The enzyme catalyses hexacosanoyl-CoA + H2O = hexacosanoate + CoA + H(+). It catalyses the reaction dodecanoyl-CoA + H2O = dodecanoate + CoA + H(+). It carries out the reaction tetradecanoyl-CoA + H2O = tetradecanoate + CoA + H(+). The catalysed reaction is choloyl-CoA + taurine = taurocholate + CoA + H(+). The enzyme catalyses chenodeoxycholoyl-CoA + glycine = glycochenodeoxycholate + CoA + H(+). It catalyses the reaction chenodeoxycholoyl-CoA + taurine = taurochenodeoxycholate + CoA + H(+). It carries out the reaction eicosanoyl-CoA + glycine = N-eicosanoylglycinate + CoA + H(+). The catalysed reaction is hexacosanoyl-CoA + glycine = N-hexacosanoylglycine + CoA + H(+). The enzyme catalyses docosanoyl-CoA + glycine = N-docosanoylglycine + CoA + H(+). Its function is as follows. Catalyzes the amidation of bile acids (BAs) with the amino acid taurine. Selective for taurine conjugation of cholyl CoA and only taurine-conjugated BAs are found in bile. Amidation of BAs in the liver with taurine prior to their excretion into bile is an important biochemical event in bile acid metabolism. This conjugation (or amidation) plays several important biological roles in that it promotes the secretion of BAs and cholesterol into bile and increases the detergent properties of BAs in the intestine, which facilitates lipid and vitamin absorption. May also act as an acyl-CoA thioesterase that regulates intracellular levels of free fatty acids. In vitro, catalyzes the hydrolysis of long- and very long-chain saturated acyl-CoAs to the free fatty acid and coenzyme A (CoASH), and conjugates glycine to these acyl-CoAs. The sequence is that of Bile acid-CoA:amino acid N-acyltransferase (Baat) from Mus musculus (Mouse).